A 291-amino-acid polypeptide reads, in one-letter code: Glycinyltransferase (291 aa).

Glu243 is a catalytic residue.

The protein belongs to the thymidine aminotransferase family.

The enzyme catalyses 5-phosphomethyl-dUMP in DNA + glycine = 5-N(alpha)-glycyl-dTMP in DNA + phosphate. Transfers glycine to 5-phosphomethyl-2'-deoxyuridine (5-PmdU) to produce 5-Nalpha-glycinylthymidine (Nalpha-GlyT) as a step in the pathway leading to thymidine hypermodifications in the viral genome. As a final result of the pathway of hypermodification, 5-aminoethyl-2'-deoxyuridine (5-NedU) substitutes for about 30% of thymidines in the viral DNA. These modifications probably prevent degradation of viral genome by the host restriction-modification antiviral defense system. The polypeptide is Glycinyltransferase (Pseudomonas phage M6).